The following is a 346-amino-acid chain: Cysteinyl leukotriene receptor 2 (346 aa).

The Extracellular portion of the chain corresponds to 1-42 (MERKFMSLQPSISVSEMEPNGTFSNNNSRNCTIENFKREFFP). Residues N20, N26, and N30 are each glycosylated (N-linked (GlcNAc...) asparagine). Residues 43–63 (IVYLIIFFWGVLGNGLSIYVF) form a helical membrane-spanning segment. The Cytoplasmic segment spans residues 64-72 (LQPYKKSTS). A helical membrane pass occupies residues 73 to 93 (VNVFMLNLAISDLLFISTLPF). Topologically, residues 94–123 (RADYYLRGSNWIFGDLACRIMSYSLYVNMY) are extracellular. C111 and C187 are joined by a disulfide. A helical membrane pass occupies residues 124–144 (SSIYFLTVLSVVRFLAMVHPF). Residues 145-153 (RLLHVTSIR) are Cytoplasmic-facing. Residues 154 to 174 (SAWILCGIIWILIMASSIMLL) form a helical membrane-spanning segment. Residues 175-204 (DSGSEQNGSVTSCLELNLYKIAKLQTMNYI) are Extracellular-facing. An N-linked (GlcNAc...) asparagine glycan is attached at N181. The chain crosses the membrane as a helical span at residues 205–225 (ALVVGCLLPFFTLSICYLLII). Residues 226-245 (RVLLKVEVPESGLRVSHRKA) lie on the Cytoplasmic side of the membrane. The helical transmembrane segment at 246–266 (LTTIIITLIIFFLCFLPYHTL) threads the bilayer. The Extracellular portion of the chain corresponds to 267–286 (RTVHLTTWKVGLCKDRLHKA). A helical transmembrane segment spans residues 287-307 (LVITLALAAANACFNPLLYYF). Over 308 to 346 (AGENFKDRLKSALRKGHPQKAKTKCVFPVSVWLRKETRV) the chain is Cytoplasmic.

Belongs to the G-protein coupled receptor 1 family. As to expression, widely expressed, with highest levels in the heart, placenta, spleen, peripheral blood leukocytes and adrenal gland. In lung, expressed in the interstitial macrophages, and slightly in smooth muscle cells.

The protein localises to the cell membrane. Its function is as follows. Receptor for cysteinyl leukotrienes. The response is mediated via a G-protein that activates a phosphatidylinositol-calcium second messenger system. Stimulation by BAY u9773, a partial agonist, induces specific contractions of pulmonary veins and might also have an indirect role in the relaxation of the pulmonary vascular endothelium. The rank order of affinities for the leukotrienes is LTC4 = LTD4 &gt;&gt; LTE4. The sequence is that of Cysteinyl leukotriene receptor 2 (CYSLTR2) from Homo sapiens (Human).